Consider the following 505-residue polypeptide: Lysine--tRNA ligase (505 aa).

Positions 415 and 422 each coordinate Mg(2+).

The protein belongs to the class-II aminoacyl-tRNA synthetase family. In terms of assembly, homodimer. Mg(2+) serves as cofactor.

Its subcellular location is the cytoplasm. The enzyme catalyses tRNA(Lys) + L-lysine + ATP = L-lysyl-tRNA(Lys) + AMP + diphosphate. The protein is Lysine--tRNA ligase of Salmonella typhi.